The following is a 697-amino-acid chain: Colicin-D (697 aa).

Positions 17–24 match the TonB box motif; that stretch reads HSMVVWPS.

Belongs to the cloacin colicin family.

Functionally, colicins are polypeptide toxins produced by and active against E.coli and closely related bacteria. Colicin D inhibits protein synthesis. This chain is Colicin-D (cda), found in Escherichia coli.